The chain runs to 236 residues: Potassium/proton antiporter CemA (236 aa).

4 consecutive transmembrane segments (helical) span residues 12 to 32, 114 to 134, 161 to 181, and 196 to 216; these read TVTS…TNHV, IANV…LLLG, IILF…EILI, and FIFL…KYWI.

The protein belongs to the CemA family.

The protein localises to the plastid. The protein resides in the chloroplast inner membrane. It carries out the reaction K(+)(in) + H(+)(out) = K(+)(out) + H(+)(in). Functionally, contributes to K(+)/H(+) antiport activity by supporting proton efflux to control proton extrusion and homeostasis in chloroplasts in a light-dependent manner to modulate photosynthesis. Prevents excessive induction of non-photochemical quenching (NPQ) under continuous-light conditions. Indirectly promotes efficient inorganic carbon uptake into chloroplasts. The protein is Potassium/proton antiporter CemA of Chlorokybus atmophyticus (Soil alga).